The sequence spans 51 residues: Large ribosomal subunit protein bL33 (51 aa).

Belongs to the bacterial ribosomal protein bL33 family.

The polypeptide is Large ribosomal subunit protein bL33 (Marinobacter nauticus (strain ATCC 700491 / DSM 11845 / VT8) (Marinobacter aquaeolei)).